The sequence spans 160 residues: Nucleotide-binding protein AHA_1129 (160 aa).

This sequence belongs to the YajQ family.

Functionally, nucleotide-binding protein. This chain is Nucleotide-binding protein AHA_1129, found in Aeromonas hydrophila subsp. hydrophila (strain ATCC 7966 / DSM 30187 / BCRC 13018 / CCUG 14551 / JCM 1027 / KCTC 2358 / NCIMB 9240 / NCTC 8049).